Here is a 538-residue protein sequence, read N- to C-terminus: Carboxypeptidase 2 (538 aa).

Positions 1–21 (MVAYRFLTLISLGLGSHCASA) are cleaved as a signal peptide. N-linked (GlcNAc...) asparagine glycosylation occurs at Asn-46. The interval 53 to 76 (PAFTSPGTVPRGFSDGTSGPTRDE) is disordered. Positions 71 to 351 (GPTRDETMEG…VMVKSILQTA (281 aa)) constitute a Peptidase M14 domain. Positions 136, 139, and 224 each coordinate Zn(2+). Glu-322 (proton donor/acceptor) is an active-site residue. N-linked (GlcNAc...) asparagine glycans are attached at residues Asn-393 and Asn-459.

This sequence belongs to the peptidase M14 family. The cofactor is Zn(2+).

The protein resides in the secreted. Extracellular metalloprotease that contributes to pathogenicity. The polypeptide is Carboxypeptidase 2 (MCPB) (Trichophyton equinum (Horse ringworm fungus)).